The primary structure comprises 374 residues: Type IV secretion system protein PtlG homolog (374 aa).

Residues 38–56 (WMFALVAVALSCLLATGIW) traverse the membrane as a helical segment. The tract at residues 86-117 (HPREPEPAPLPDMPAAPDPILPQPRPAPPVPP) is disordered. The span at 92–117 (PAPLPDMPAAPDPILPQPRPAPPVPP) shows a compositional bias: pro residues.

Belongs to the TrbI/VirB10 family.

It is found in the cell membrane. The polypeptide is Type IV secretion system protein PtlG homolog (ptlG) (Bordetella bronchiseptica (strain ATCC BAA-588 / NCTC 13252 / RB50) (Alcaligenes bronchisepticus)).